Consider the following 325-residue polypeptide: Siroheme decarboxylase NirDL subunit (325 aa).

It belongs to the Ahb/Nir family. As to quaternary structure, forms a complex composed of NirDL, NirG and NirH. All proteins are required for the total conversion of siroheme to didecarboxysiroheme.

It carries out the reaction siroheme + 2 H(+) = 12,18-didecarboxysiroheme + 2 CO2. Its pathway is porphyrin-containing compound metabolism. Functionally, involved in heme d1 biosynthesis. Catalyzes the decarboxylation of siroheme into didecarboxysiroheme. In Paracoccus denitrificans (strain Pd 1222), this protein is Siroheme decarboxylase NirDL subunit.